Consider the following 354-residue polypeptide: Serum paraoxonase/lactonase 3 (354 aa).

C42 and C352 form a disulfide bridge. Residue N50 is glycosylated (N-linked (GlcNAc...) asparagine). Residues E53 and D54 each coordinate Ca(2+). The active-site Proton acceptor is the H114. Ca(2+) is bound at residue I116. S165 carries the post-translational modification Phosphoserine. Ca(2+) is bound by residues N167, D168, N223, D268, and N269. Residues N269 and N323 are each glycosylated (N-linked (GlcNAc...) asparagine).

It belongs to the paraoxonase family. Homodimer. It depends on Ca(2+) as a cofactor. Post-translationally, glycosylated. The signal sequence is not cleaved.

Its subcellular location is the secreted. The protein localises to the extracellular space. The catalysed reaction is a phenyl acetate + H2O = a phenol + acetate + H(+). The enzyme catalyses An aryl dialkyl phosphate + H2O = dialkyl phosphate + an aryl alcohol.. It carries out the reaction an N-acyl-L-homoserine lactone + H2O = an N-acyl-L-homoserine + H(+). Functionally, has low activity towards the organophosphate paraxon and aromatic carboxylic acid esters. Rapidly hydrolyzes lactones such as statin prodrugs (e.g. lovastatin). Hydrolyzes aromatic lactones and 5- or 6-member ring lactones with aliphatic substituents but not simple lactones or those with polar substituents. The protein is Serum paraoxonase/lactonase 3 (Pon3) of Rattus norvegicus (Rat).